Reading from the N-terminus, the 160-residue chain is SsrA-binding protein (160 aa).

This sequence belongs to the SmpB family.

Its subcellular location is the cytoplasm. Its function is as follows. Required for rescue of stalled ribosomes mediated by trans-translation. Binds to transfer-messenger RNA (tmRNA), required for stable association of tmRNA with ribosomes. tmRNA and SmpB together mimic tRNA shape, replacing the anticodon stem-loop with SmpB. tmRNA is encoded by the ssrA gene; the 2 termini fold to resemble tRNA(Ala) and it encodes a 'tag peptide', a short internal open reading frame. During trans-translation Ala-aminoacylated tmRNA acts like a tRNA, entering the A-site of stalled ribosomes, displacing the stalled mRNA. The ribosome then switches to translate the ORF on the tmRNA; the nascent peptide is terminated with the 'tag peptide' encoded by the tmRNA and targeted for degradation. The ribosome is freed to recommence translation, which seems to be the essential function of trans-translation. The protein is SsrA-binding protein of Pectobacterium carotovorum subsp. carotovorum (strain PC1).